The primary structure comprises 361 residues: Epoxyqueuosine reductase (361 aa).

Asp-147 (proton donor) is an active-site residue. The region spanning 193-222 (VDPAMDSEHCGRCSACLDICPTAAFVGPYR) is the 4Fe-4S ferredoxin-type domain. [4Fe-4S] cluster contacts are provided by Cys-202, Cys-205, Cys-208, Cys-212, Cys-228, Cys-255, Cys-258, and Cys-262.

This sequence belongs to the QueG family. In terms of assembly, monomer. The cofactor is cob(II)alamin. [4Fe-4S] cluster is required as a cofactor.

The protein resides in the cytoplasm. The enzyme catalyses epoxyqueuosine(34) in tRNA + AH2 = queuosine(34) in tRNA + A + H2O. Its pathway is tRNA modification; tRNA-queuosine biosynthesis. Its function is as follows. Catalyzes the conversion of epoxyqueuosine (oQ) to queuosine (Q), which is a hypermodified base found in the wobble positions of tRNA(Asp), tRNA(Asn), tRNA(His) and tRNA(Tyr). In Pseudomonas aeruginosa (strain ATCC 15692 / DSM 22644 / CIP 104116 / JCM 14847 / LMG 12228 / 1C / PRS 101 / PAO1), this protein is Epoxyqueuosine reductase.